Here is a 993-residue protein sequence, read N- to C-terminus: General transcription factor II-I repeat domain-containing protein 1 (993 aa).

GTF2I-like repeat units follow at residues 117 to 211 and 332 to 426; these read LGPT…EPKS and LRET…DGTT. Residues 461–480 form a disordered region; sequence GSRSEKSSISDECEPGTSSE. GTF2I-like repeat units lie at residues 597–691, 727–821, and 824–918; these read DGIG…LEDC, LSRI…RPDD, and ANRL…ICSE. Residues 916-961 are disordered; the sequence is CSEPPKIKNGNTGPKRKRKRVSEGNSISSASSNCSSSSSSSSNMDP. The Nuclear localization signal signature appears at 929-936; sequence PKRKRKRV. Positions 938–961 are enriched in low complexity; it reads EGNSISSASSNCSSSSSSSSNMDP.

The protein belongs to the TFII-I family. Interacts (via repeats 4-5) with foxh1/fast1 (via Fork-head domain). Interacts with smad2 and smad3 (via MH1 domain) in a ligand (activin)-dependent manner. Interacts with pou5f1.1/oct-25 to form a repression complex on the promoters of the gsc and mix2 genes. In terms of tissue distribution, uniformly expressed in the embryo in pre- and early gastrula stages. Enriched in the head region of early neurula through tailbud stages.

The protein localises to the nucleus. Its function is as follows. Transcription factor that activates a subset of organizer-specific genes. Binds to the distal element (DE) of the gsc promoter to regulate its expression. In the presence of pou5f1.1/oct-25, forms a repression complex on the promoter of the gsc and mix2 genes to inhibit their transcription. The sequence is that of General transcription factor II-I repeat domain-containing protein 1 (gtf2ird1) from Xenopus laevis (African clawed frog).